Here is a 168-residue protein sequence, read N- to C-terminus: Variant surface antigen D (168 aa).

The signal sequence occupies residues 1–29 (MKKSIFSKKLLVSFGSLVTLAAIPLIAIS). Cys30 is lipidated: N-palmitoyl cysteine. Cys30 carries S-diacylglycerol cysteine lipidation. Positions 33 to 168 (TNTDQSQQPG…STSTSNMNTR (136 aa)) are disordered. Composition is skewed to low complexity over residues 35-44 (TDQSQQPGSG) and 52-71 (GTTT…ESGT). The span at 72 to 81 (TTGGQTGTTT) shows a compositional bias: gly residues. Tandem repeats lie at residues 81 to 92 (TGGQSDSTSTSK), 93 to 104 (EQGSSDSTSTSK), 105 to 116 (EQGSSDSTSTSK), 117 to 128 (EQGSSDSTSTSK), 129 to 140 (EQGSSDSTSTSK), 141 to 152 (EQGSSDSTSTSK), and 153 to 164 (EQGSSDSTSTSN). Residues 81 to 164 (TGGQSDSTST…GSSDSTSTSN (84 aa)) form a 7 X 12 AA tandem repeats region. The span at 82–168 (GGQSDSTSTS…STSTSNMNTR (87 aa)) shows a compositional bias: low complexity.

The protein resides in the cell membrane. Functionally, responsible for the antigenic diversity for host adaptation. Expression in E.coli of a construct containing vlpD, vlpE, and vlpF yields antigenically distinguishable products corresponding to each gene. The sequence is that of Variant surface antigen D (vlpD) from Mesomycoplasma hyorhinis (Mycoplasma hyorhinis).